Here is a 1909-residue protein sequence, read N- to C-terminus: Receptor-type tyrosine-protein phosphatase F (1909 aa).

Positions 1-31 (MVPNTCTSVPLLPVGLPLLLLLSCIQFSSQA) are cleaved as a signal peptide. Over 32–1266 (DSLPNFVRSP…RSVDQPEMLW (1235 aa)) the chain is Extracellular. Ig-like C2-type domains lie at 35-125 (PNFV…AKLT), 137-225 (PTID…ANLY), and 233-315 (PRFS…AQVS). Cys56 and Cys109 are joined by a disulfide. 68 to 77 (WMKKGKKVSS) contacts heparin. The N-linked (GlcNAc...) asparagine glycan is linked to Asn119. Cys158 and Cys208 form a disulfide bridge. 2 N-linked (GlcNAc...) asparagine glycosylation sites follow: Asn251 and Asn296. An intrachain disulfide couples Cys254 to Cys299. Fibronectin type-III domains follow at residues 322-412 (PPTS…TGEQ), 417-511 (PPLH…TQQG), 515-604 (QPSS…TAQS), 609-706 (PPQD…TNED), 711-819 (PPRK…TTGA), 820-914 (VPGK…PEDV), 918-1013 (FPLN…TSPA), and 1014-1098 (FATS…TAPD). Residues 399–418 (GPPSEPVETRTGEQAPSSPP) form a disordered region. N-linked (GlcNAc...) asparagine glycosylation occurs at Asn721. Asn963 and Asn966 each carry an N-linked (GlcNAc...) asparagine glycan. A helical membrane pass occupies residues 1267–1287 (VMGPVLAVVLIIIIVIAILLF). Residues 1288–1909 (KRKRASPLPK…YLGSFDHYAT (622 aa)) are Cytoplasmic-facing. 2 consecutive Tyrosine-protein phosphatase domains span residues 1354–1609 (FSQE…LLEA) and 1641–1900 (MELE…ALEY). Residues Asp1518, 1550 to 1556 (CSAGVGR), and Gln1594 each bind substrate. Catalysis depends on Cys1550, which acts as the Phosphocysteine intermediate. The Phosphocysteine intermediate role is filled by Cys1841.

This sequence belongs to the protein-tyrosine phosphatase family. Receptor class 2A subfamily.

The protein resides in the membrane. It carries out the reaction O-phospho-L-tyrosyl-[protein] + H2O = L-tyrosyl-[protein] + phosphate. In terms of biological role, possible cell adhesion receptor. It possesses an intrinsic protein tyrosine phosphatase activity (PTPase). Functionally, the first PTPase domain has enzymatic activity, while the second one seems to affect the substrate specificity of the first one. The sequence is that of Receptor-type tyrosine-protein phosphatase F (ptprf) from Danio rerio (Zebrafish).